A 484-amino-acid polypeptide reads, in one-letter code: tRNA-2-methylthio-N(6)-dimethylallyladenosine synthase (484 aa).

Positions 36–153 (GKLYIKTHGC…LPELIRARRE (118 aa)) constitute an MTTase N-terminal domain. Residues C45, C82, C116, C190, C194, and C197 each coordinate [4Fe-4S] cluster. Residues 176–415 (RAEGPSAFVS…HISAHAASIS (240 aa)) enclose the Radical SAM core domain. One can recognise a TRAM domain in the interval 416 to 479 (QSMVGSVQRV…SNSLRGRIQL (64 aa)). Residues 428-450 (EGPSRRDPNELTGKSENMRPVNF) form a disordered region.

It belongs to the methylthiotransferase family. MiaB subfamily. Monomer. The cofactor is [4Fe-4S] cluster.

It localises to the cytoplasm. It carries out the reaction N(6)-dimethylallyladenosine(37) in tRNA + (sulfur carrier)-SH + AH2 + 2 S-adenosyl-L-methionine = 2-methylsulfanyl-N(6)-dimethylallyladenosine(37) in tRNA + (sulfur carrier)-H + 5'-deoxyadenosine + L-methionine + A + S-adenosyl-L-homocysteine + 2 H(+). In terms of biological role, catalyzes the methylthiolation of N6-(dimethylallyl)adenosine (i(6)A), leading to the formation of 2-methylthio-N6-(dimethylallyl)adenosine (ms(2)i(6)A) at position 37 in tRNAs that read codons beginning with uridine. The polypeptide is tRNA-2-methylthio-N(6)-dimethylallyladenosine synthase (Xanthomonas oryzae pv. oryzae (strain PXO99A)).